Reading from the N-terminus, the 434-residue chain is MTDVLPTTPTASGVTDRPLSEVDPEIAAVLDAELGRQRDTLEMIASENFAPRSVLEAQGSVLTNKYAEGYPGKRYYGGCEHVDVAEELARTRAKELFGAEHANVQPHSGASANAAAMHAFIRGGDGILGLELAHGGHLTHGMKINFSGRMYDVSSYGVDPQTFRVDMDVVRAVALESRPKLIIAGWSAYPRQLDFAAFRSIADEVGAHLMVDMAHFAGLVAAGLHPSPVPHAHVVTSTVHKTLAGPRSGLILTRQEFAKKIDSAVFPGQQGGPLMHVVAAKAVAFKVAGSEEFAERQRRTLEGAKIVAERLTAPDVAEAGVSVLTGGTDVHLVLVDLRDSKLDGQQAEDRLHEVGITVNRNAVPFDPRPPMVTSGLRIGTPALATRGFGAAEFTEVADVIALALKPEFDADALRARVAKLTAEFPLYPSAGSFA.

(6S)-5,6,7,8-tetrahydrofolate contacts are provided by residues L132 and 136–138; that span reads GHL. K241 is subject to N6-(pyridoxal phosphate)lysine.

This sequence belongs to the SHMT family. As to quaternary structure, homodimer. Pyridoxal 5'-phosphate serves as cofactor.

It localises to the cytoplasm. It carries out the reaction (6R)-5,10-methylene-5,6,7,8-tetrahydrofolate + glycine + H2O = (6S)-5,6,7,8-tetrahydrofolate + L-serine. It participates in one-carbon metabolism; tetrahydrofolate interconversion. It functions in the pathway amino-acid biosynthesis; glycine biosynthesis; glycine from L-serine: step 1/1. In terms of biological role, catalyzes the reversible interconversion of serine and glycine with tetrahydrofolate (THF) serving as the one-carbon carrier. This reaction serves as the major source of one-carbon groups required for the biosynthesis of purines, thymidylate, methionine, and other important biomolecules. Also exhibits THF-independent aldolase activity toward beta-hydroxyamino acids, producing glycine and aldehydes, via a retro-aldol mechanism. The chain is Serine hydroxymethyltransferase from Kineococcus radiotolerans (strain ATCC BAA-149 / DSM 14245 / SRS30216).